A 36-amino-acid polypeptide reads, in one-letter code: Photosystem I reaction center subunit VIII (36 aa).

A helical membrane pass occupies residues 8-28; that stretch reads SIFVPLVGLVFPAIAMASLFL.

It belongs to the PsaI family.

Its subcellular location is the plastid. The protein localises to the chloroplast thylakoid membrane. Its function is as follows. May help in the organization of the PsaL subunit. This chain is Photosystem I reaction center subunit VIII, found in Solanum bulbocastanum (Wild potato).